Consider the following 192-residue polypeptide: uncharacterized protein (192 aa).

This is an uncharacterized protein from Methanocaldococcus jannaschii (strain ATCC 43067 / DSM 2661 / JAL-1 / JCM 10045 / NBRC 100440) (Methanococcus jannaschii).